Here is a 221-residue protein sequence, read N- to C-terminus: Ribosomal RNA small subunit methyltransferase G (221 aa).

Residues G85, L90, 138 to 139 (AE), and R151 contribute to the S-adenosyl-L-methionine site.

The protein belongs to the methyltransferase superfamily. RNA methyltransferase RsmG family.

It localises to the cytoplasm. It carries out the reaction guanosine(527) in 16S rRNA + S-adenosyl-L-methionine = N(7)-methylguanosine(527) in 16S rRNA + S-adenosyl-L-homocysteine. Its function is as follows. Specifically methylates the N7 position of guanine in position 527 of 16S rRNA. The sequence is that of Ribosomal RNA small subunit methyltransferase G from Caulobacter sp. (strain K31).